The primary structure comprises 290 residues: Protein-lysine methyltransferase METTL21E (290 aa).

Residues Trp-96, 124 to 126 (GAG), Asp-145, Trp-176, and Ala-197 each bind S-adenosyl-L-methionine.

This sequence belongs to the methyltransferase superfamily. METTL21 family.

Protein-lysine methyltransferase. The polypeptide is Protein-lysine methyltransferase METTL21E (METTL21E) (Bos taurus (Bovine)).